The sequence spans 310 residues: N-acetyl-gamma-glutamyl-phosphate reductase (310 aa).

Cys117 is a catalytic residue.

Belongs to the NAGSA dehydrogenase family. Type 2 subfamily.

It is found in the cytoplasm. The enzyme catalyses N-acetyl-L-glutamate 5-semialdehyde + phosphate + NADP(+) = N-acetyl-L-glutamyl 5-phosphate + NADPH + H(+). It participates in amino-acid biosynthesis; L-arginine biosynthesis; N(2)-acetyl-L-ornithine from L-glutamate: step 3/4. Its function is as follows. Catalyzes the NADPH-dependent reduction of N-acetyl-5-glutamyl phosphate to yield N-acetyl-L-glutamate 5-semialdehyde. The sequence is that of N-acetyl-gamma-glutamyl-phosphate reductase from Sinorhizobium medicae (strain WSM419) (Ensifer medicae).